A 443-amino-acid chain; its full sequence is Probable protein S-acyltransferase 7 (443 aa).

2 helical membrane passes run 44-64 (SLAL…IFVA) and 76-96 (GVSI…LLLL). The 51-residue stretch at 149-199 (KYCDTCMLYRPPRCSHCSICNNCVERFDHHCPWVGQCIGMRNYRFFFMFVF) folds into the DHHC domain. Catalysis depends on Cys-179, which acts as the S-palmitoyl cysteine intermediate. Helical transmembrane passes span 193-213 (FFFM…AFCW) and 237-257 (SIVL…LTVF). Phosphoserine is present on residues Ser-327 and Ser-377. Positions 382-392 (ATVDEQSDRPS) are enriched in basic and acidic residues. The disordered stretch occupies residues 382-443 (ATVDEQSDRP…SGLVTENRPT (62 aa)). Ser-406 carries the phosphoserine modification.

The protein belongs to the DHHC palmitoyltransferase family.

It is found in the cell membrane. It catalyses the reaction L-cysteinyl-[protein] + hexadecanoyl-CoA = S-hexadecanoyl-L-cysteinyl-[protein] + CoA. Its function is as follows. Palmitoyl acyltransferase. In Arabidopsis thaliana (Mouse-ear cress), this protein is Probable protein S-acyltransferase 7 (PAT07).